Reading from the N-terminus, the 757-residue chain is RNA-directed RNA polymerase catalytic subunit (757 aa).

The segment at 53–82 is disordered; sequence GRWTKNTETGAPQLNPIDGPLPKDNEPSGY. 2 short sequence motifs (nuclear localization signal) span residues 187–195 and 203–216; these read RKRRVRDNV and RTIG…DKRS. Positions 249-256 are promoter-binding site; it reads RGFVYFVE. In terms of domain architecture, RdRp catalytic spans 286-483; that stretch reads VRKMMTNSQD…GINMSKKKSY (198 aa).

It belongs to the influenza viruses polymerase PB1 family. In terms of assembly, influenza RNA polymerase is composed of three subunits: PB1, PB2 and PA. Interacts (via N-terminus) with PA (via C-terminus). Interacts (via C-terminus) with PB2 (via N-terminus); this interaction is essential for transcription initiation. Interacts (via C-terminus) with human PKP2 (via N-terminus); the interaction competitively inhibits the interaction between the RNA polymerase subunits PB1 and PB2. Phosphorylated by host PRKCA.

The protein resides in the host nucleus. Its subcellular location is the host cytoplasm. The catalysed reaction is RNA(n) + a ribonucleoside 5'-triphosphate = RNA(n+1) + diphosphate. In terms of biological role, RNA-dependent RNA polymerase which is responsible for replication and transcription of virus RNA segments. The transcription of viral mRNAs occurs by a unique mechanism called cap-snatching. 5' methylated caps of cellular mRNAs are cleaved after 10-13 nucleotides by PA. In turn, these short capped RNAs are used as primers by PB1 for transcription of viral mRNAs. During virus replication, PB1 initiates RNA synthesis and copy vRNA into complementary RNA (cRNA) which in turn serves as a template for the production of more vRNAs. The sequence is that of RNA-directed RNA polymerase catalytic subunit from Influenza A virus (strain A/USA:Memphis/10/1996 H1N1).